The following is a 735-amino-acid chain: Glutamine-dependent NAD(+) synthetase (735 aa).

Residues Leu4–Leu274 form the CN hydrolase domain. Catalysis depends on Glu44, which acts as the Proton acceptor; for glutaminase activity. The active-site For glutaminase activity is the Lys113. Catalysis depends on Cys174, which acts as the Nucleophile; for glutaminase activity. The ligase stretch occupies residues Tyr324–Lys711. Pro354–Ser361 is an ATP binding site. The active site involves Ser356.

The protein in the C-terminal section; belongs to the NAD synthetase family.

It carries out the reaction deamido-NAD(+) + L-glutamine + ATP + H2O = L-glutamate + AMP + diphosphate + NAD(+) + H(+). It functions in the pathway cofactor biosynthesis; NAD(+) biosynthesis; NAD(+) from deamido-NAD(+) (L-Gln route): step 1/1. This is Glutamine-dependent NAD(+) synthetase from Oryza sativa subsp. indica (Rice).